A 306-amino-acid polypeptide reads, in one-letter code: Agmatinase (306 aa).

Mn(2+) is bound by residues His126, Asp149, His151, Asp153, Asp230, and Asp232.

This sequence belongs to the arginase family. Agmatinase subfamily. It depends on Mn(2+) as a cofactor.

It carries out the reaction agmatine + H2O = urea + putrescine. It functions in the pathway amine and polyamine biosynthesis; putrescine biosynthesis via agmatine pathway; putrescine from agmatine: step 1/1. Functionally, catalyzes the formation of putrescine from agmatine. This Escherichia coli O9:H4 (strain HS) protein is Agmatinase.